Here is an 801-residue protein sequence, read N- to C-terminus: Phenylalanine--tRNA ligase beta subunit (801 aa).

One can recognise a tRNA-binding domain in the interval 39–153; it reads AEGLSKLVVG…EDAVPGESIF (115 aa). The B5 domain maps to 406–481; that stretch reads TDDIQVSTSL…RIYGYDKLPT (76 aa). The Mg(2+) site is built by Asp459, Asp465, Glu468, and Glu469. An FDX-ACB domain is found at 708 to 801; that stretch reads TKFPAVSRDI…LTEKVGAEVR (94 aa).

The protein belongs to the phenylalanyl-tRNA synthetase beta subunit family. Type 1 subfamily. In terms of assembly, tetramer of two alpha and two beta subunits. Mg(2+) is required as a cofactor.

The protein resides in the cytoplasm. It catalyses the reaction tRNA(Phe) + L-phenylalanine + ATP = L-phenylalanyl-tRNA(Phe) + AMP + diphosphate + H(+). This Streptococcus mutans serotype c (strain ATCC 700610 / UA159) protein is Phenylalanine--tRNA ligase beta subunit.